Here is a 115-residue protein sequence, read N- to C-terminus: Large ribosomal subunit protein bL19 (115 aa).

This sequence belongs to the bacterial ribosomal protein bL19 family.

Functionally, this protein is located at the 30S-50S ribosomal subunit interface and may play a role in the structure and function of the aminoacyl-tRNA binding site. The protein is Large ribosomal subunit protein bL19 of Streptococcus uberis (strain ATCC BAA-854 / 0140J).